The chain runs to 482 residues: Altronate oxidoreductase (482 aa).

NAD(+) is bound at residue 18–29 (IIQFGEGNFLRA).

This sequence belongs to the mannitol dehydrogenase family. UxaB subfamily.

It carries out the reaction D-altronate + NAD(+) = keto-D-tagaturonate + NADH + H(+). It participates in carbohydrate metabolism; pentose and glucuronate interconversion. This chain is Altronate oxidoreductase, found in Shigella sonnei (strain Ss046).